Consider the following 314-residue polypeptide: Lipoyl synthase (314 aa).

The [4Fe-4S] cluster site is built by C67, C72, C78, C93, C97, C100, and S306. In terms of domain architecture, Radical SAM core spans 79 to 295 (FNRGTATFMI…KNYALSIGFK (217 aa)).

This sequence belongs to the radical SAM superfamily. Lipoyl synthase family. Requires [4Fe-4S] cluster as cofactor.

The protein localises to the cytoplasm. The catalysed reaction is [[Fe-S] cluster scaffold protein carrying a second [4Fe-4S](2+) cluster] + N(6)-octanoyl-L-lysyl-[protein] + 2 oxidized [2Fe-2S]-[ferredoxin] + 2 S-adenosyl-L-methionine + 4 H(+) = [[Fe-S] cluster scaffold protein] + N(6)-[(R)-dihydrolipoyl]-L-lysyl-[protein] + 4 Fe(3+) + 2 hydrogen sulfide + 2 5'-deoxyadenosine + 2 L-methionine + 2 reduced [2Fe-2S]-[ferredoxin]. The protein operates within protein modification; protein lipoylation via endogenous pathway; protein N(6)-(lipoyl)lysine from octanoyl-[acyl-carrier-protein]: step 2/2. Catalyzes the radical-mediated insertion of two sulfur atoms into the C-6 and C-8 positions of the octanoyl moiety bound to the lipoyl domains of lipoate-dependent enzymes, thereby converting the octanoylated domains into lipoylated derivatives. The polypeptide is Lipoyl synthase (Buchnera aphidicola subsp. Baizongia pistaciae (strain Bp)).